A 350-amino-acid chain; its full sequence is Uroporphyrinogen decarboxylase (350 aa).

Substrate-binding positions include 23–27 (RQAGR), aspartate 72, tyrosine 149, serine 204, and histidine 318.

Belongs to the uroporphyrinogen decarboxylase family. Homodimer.

The protein localises to the cytoplasm. It carries out the reaction uroporphyrinogen III + 4 H(+) = coproporphyrinogen III + 4 CO2. It participates in porphyrin-containing compound metabolism; protoporphyrin-IX biosynthesis; coproporphyrinogen-III from 5-aminolevulinate: step 4/4. Catalyzes the decarboxylation of four acetate groups of uroporphyrinogen-III to yield coproporphyrinogen-III. The sequence is that of Uroporphyrinogen decarboxylase from Carboxydothermus hydrogenoformans (strain ATCC BAA-161 / DSM 6008 / Z-2901).